The sequence spans 617 residues: tRNA uridine 5-carboxymethylaminomethyl modification enzyme MnmG (617 aa).

FAD is bound by residues G9 to G14, V121, and T176. NAD(+) is bound at residue G269–F283. Q366 lines the FAD pocket.

This sequence belongs to the MnmG family. Homodimer. Heterotetramer of two MnmE and two MnmG subunits. Requires FAD as cofactor.

It localises to the cytoplasm. Its function is as follows. NAD-binding protein involved in the addition of a carboxymethylaminomethyl (cmnm) group at the wobble position (U34) of certain tRNAs, forming tRNA-cmnm(5)s(2)U34. This Acholeplasma laidlawii (strain PG-8A) protein is tRNA uridine 5-carboxymethylaminomethyl modification enzyme MnmG.